An 86-amino-acid polypeptide reads, in one-letter code: Cytochrome c oxidase subunit 6B1 (86 aa).

The residue at position 2 (A2) is an N-acetylalanine. The CHCH domain maps to T27–W73. Positions C30–C40 match the Cx9C motif motif. 2 cysteine pairs are disulfide-bonded: C30-C65 and C40-C54. The Cx10C motif motif lies at C54–C65.

This sequence belongs to the cytochrome c oxidase subunit 6B family. As to quaternary structure, component of the cytochrome c oxidase (complex IV, CIV), a multisubunit enzyme composed of 14 subunits. The complex is composed of a catalytic core of 3 subunits MT-CO1, MT-CO2 and MT-CO3, encoded in the mitochondrial DNA, and 11 supernumerary subunits COX4I1 (or COX4I2), COX5A, COX5B, COX6A1 (or COX6A2), COX6B1 (or COX6B2), COX6C, COX7A2 (or COX7A1), COX7B, COX7C, COX8A and NDUFA4, which are encoded in the nuclear genome. The complex exists as a monomer or a dimer and forms supercomplexes (SCs) in the inner mitochondrial membrane with NADH-ubiquinone oxidoreductase (complex I, CI) and ubiquinol-cytochrome c oxidoreductase (cytochrome b-c1 complex, complex III, CIII), resulting in different assemblies (supercomplex SCI(1)III(2)IV(1) and megacomplex MCI(2)III(2)IV(2)).

The protein resides in the mitochondrion inner membrane. Its pathway is energy metabolism; oxidative phosphorylation. Its function is as follows. Component of the cytochrome c oxidase, the last enzyme in the mitochondrial electron transport chain which drives oxidative phosphorylation. The respiratory chain contains 3 multisubunit complexes succinate dehydrogenase (complex II, CII), ubiquinol-cytochrome c oxidoreductase (cytochrome b-c1 complex, complex III, CIII) and cytochrome c oxidase (complex IV, CIV), that cooperate to transfer electrons derived from NADH and succinate to molecular oxygen, creating an electrochemical gradient over the inner membrane that drives transmembrane transport and the ATP synthase. Cytochrome c oxidase is the component of the respiratory chain that catalyzes the reduction of oxygen to water. Electrons originating from reduced cytochrome c in the intermembrane space (IMS) are transferred via the dinuclear copper A center (CU(A)) of subunit 2 and heme A of subunit 1 to the active site in subunit 1, a binuclear center (BNC) formed by heme A3 and copper B (CU(B)). The BNC reduces molecular oxygen to 2 water molecules using 4 electrons from cytochrome c in the IMS and 4 protons from the mitochondrial matrix. This is Cytochrome c oxidase subunit 6B1 (COX6B1) from Homo sapiens (Human).